Here is a 509-residue protein sequence, read N- to C-terminus: ATP synthase subunit alpha (509 aa).

169–176 is an ATP binding site; sequence GDRQTGKT.

The protein belongs to the ATPase alpha/beta chains family. F-type ATPases have 2 components, CF(1) - the catalytic core - and CF(0) - the membrane proton channel. CF(1) has five subunits: alpha(3), beta(3), gamma(1), delta(1), epsilon(1). CF(0) has three main subunits: a(1), b(2) and c(9-12). The alpha and beta chains form an alternating ring which encloses part of the gamma chain. CF(1) is attached to CF(0) by a central stalk formed by the gamma and epsilon chains, while a peripheral stalk is formed by the delta and b chains.

It localises to the cell inner membrane. It carries out the reaction ATP + H2O + 4 H(+)(in) = ADP + phosphate + 5 H(+)(out). Produces ATP from ADP in the presence of a proton gradient across the membrane. The alpha chain is a regulatory subunit. This Chelativorans sp. (strain BNC1) protein is ATP synthase subunit alpha.